The primary structure comprises 119 residues: Odin profilin (119 aa).

It belongs to the Asgard profilin family.

It localises to the cytoplasm. The protein resides in the cytoskeleton. With respect to regulation, inhibition of rabbit actin polymerization is reduced by phosphatidylinositol-(4,5)-P2(1,2-dipalmitoyl), a soluble form of the phospholipid phosphatidylinositol, suggesting an unknown lipid might regulate actin-profilin interaction in vivo. Functionally, binds to actin and affects the structure of the cytoskeleton. At high concentrations inhibits spontaneous rabbit actin nucleation. This strongly suggests this archaea has a profilin-regulated actin system, and actin-type genes can be identified in this organism. The sequence is that of Odin profilin from Odinarchaeota yellowstonii (strain LCB_4).